Consider the following 74-residue polypeptide: Peptide BmKb1 (74 aa).

Residues 1–22 (MEIKYLLTVFLVLLIVSDHCQA) form the signal peptide. K40 is subject to Lysine amide. A propeptide spanning residues 46 to 74 (DLNGYIDHFKNFRKRDAELEELLSKLPIY) is cleaved from the precursor.

The protein belongs to the non-disulfide-bridged peptide (NDBP) superfamily. Short antimicrobial peptide (group 4) family. Expressed by the venom gland.

The protein localises to the secreted. It localises to the target cell membrane. In terms of biological role, has antibacterial activity against Gram-positive bacteria S.aureus, M.luteus, B.subtilis, and Gram-negative bacteria E.coli, and P.aeruginosa. This Olivierus martensii (Manchurian scorpion) protein is Peptide BmKb1.